We begin with the raw amino-acid sequence, 36 residues long: Photosystem II reaction center protein M (36 aa).

Met1 bears the Blocked amino end (Met) mark. The Lumenal segment spans residues 1–11 (MEVNQLGFIAT). A helical transmembrane segment spans residues 12–27 (ALFVLVPSVFLIILYV). The Cytoplasmic portion of the chain corresponds to 28–36 (QTESQQKSS).

It belongs to the PsbM family. As to quaternary structure, PSII is composed of 1 copy each of membrane proteins PsbA, PsbB, PsbC, PsbD, PsbE, PsbF, PsbH, PsbI, PsbJ, PsbK, PsbL, PsbM, PsbT, PsbX, PsbY, PsbZ, Psb30/Ycf12, peripheral proteins PsbO, CyanoQ (PsbQ), PsbU, PsbV, PsbU, PsbV and a large number of cofactors. It forms dimeric complexes. The cofactor is PSII binds multiple chlorophylls, carotenoids and specific lipids..

Its subcellular location is the cellular thylakoid membrane. In terms of biological role, one of the components of the core complex of photosystem II (PSII). PSII is a light-driven water:plastoquinone oxidoreductase that uses light energy to abstract electrons from H(2)O, generating O(2) and a proton gradient subsequently used for ATP formation. It consists of a core antenna complex that captures photons, and an electron transfer chain that converts photonic excitation into a charge separation. This subunit is found at the monomer-monomer interface. Probably involved in dimerization of PSII; at the monomer-monomer interface the only protein-protein contacts observed are between the 2 PsbM subunits. Lipids, chlorophylls and carotenoids contribute strongly to PSII dimerization. The protein is Photosystem II reaction center protein M of Thermostichus vulcanus (Synechococcus vulcanus).